Reading from the N-terminus, the 771-residue chain is MARIMSWHYGKAITLFVCLGPVALSLDTFPDCSSGPLSKLAVCDTSLDVTTRARSLVNAMTFEEKVNNTQYNSPGVPRLGLPAYNWWSEALHGVAGSPGVEFADSGPFSYATSFPQPILLGATFDDDLIKQVATVVSTEGRAFGNAGRAGLDFWTPNINPFRDARWGRGQETPGEDPLHVSRYVYHLVDGLQNGIGPANPKVVATCKHFAAYDLEDWNGVVRHSFNAEVSTQDLSEFYLPPFKSCARDAKVDAVMCSYNALNGVPACADSYLLQTILREHWKWDEPGHWITGDCGAIDDIYNGHNYTKTPAEAAATALNAGTDLDCGTVFPKYLGQAADEGLYTNKTLDKALVRLYSSLVKLGYFDPAEDQPYRSIGWKDVDSPAAEALAHKAAVEGIVLLKNDKTLPLKAKGTLALIGPYANATKQMQGNYEGPPKYIRTLLWAATQAGYDVKYVAGTAINANSTAGFDAALSAAKQADVVVYAGGIDNTIEAEGHDRTTIVWPGNQLDLIDQLSKIGKPLVVVQFGGGQVDDSSLLSNPHVNALLWTGYPSQEGGSAIFDILTGKTAPAGRLPVTQYPADYVNQVPLTDMALRPGSNTPGRTYRWYDKAVLPFGFGLHYTTFKISWPRRALGPYDTAALVSRSPKNVPIDRAAFDTFHIQVTNTGKTTSDYVALLFLKTIDAGPKPYPLKTLVGYTRAKQIKPGEKRSVDIKVSLGSLARTAENGDLVLYPGRYTLEVDVGENQYPTASFTVKGKEAILDSFPQPPETR.

The first 25 residues, 1-25, serve as a signal peptide directing secretion; the sequence is MARIMSWHYGKAITLFVCLGPVALS. Residue asparagine 67 is glycosylated (N-linked (GlcNAc...) asparagine). Aspartate 293 is a catalytic residue. N-linked (GlcNAc...) asparagine glycosylation is found at asparagine 305, asparagine 345, asparagine 423, and asparagine 464.

Belongs to the glycosyl hydrolase 3 family.

It is found in the secreted. It carries out the reaction Hydrolysis of (1-&gt;4)-beta-D-xylans, to remove successive D-xylose residues from the non-reducing termini.. It participates in glycan degradation; xylan degradation. Xylan 1,4-beta-xylosidase involved in the hydrolysis of xylan, a major structural heterogeneous polysaccharide found in plant biomass representing the second most abundant polysaccharide in the biosphere, after cellulose. The protein is Probable exo-1,4-beta-xylosidase xlnD (xlnD) of Neosartorya fischeri (strain ATCC 1020 / DSM 3700 / CBS 544.65 / FGSC A1164 / JCM 1740 / NRRL 181 / WB 181) (Aspergillus fischerianus).